Here is a 268-residue protein sequence, read N- to C-terminus: 1,4-dihydroxy-2-naphthoyl-CoA synthase (268 aa).

Residues 30–31 (VL), 70–74 (VGGDQ), 114–118 (YAVGG), serine 140, and serine 146 contribute to the substrate site. 139 to 141 (QSG) contacts hydrogencarbonate.

The protein belongs to the enoyl-CoA hydratase/isomerase family. MenB subfamily. The cofactor is hydrogencarbonate.

It localises to the plastid. Its subcellular location is the chloroplast. The enzyme catalyses 2-succinylbenzoyl-CoA + H(+) = 1,4-dihydroxy-2-naphthoyl-CoA + H2O. Its pathway is quinol/quinone metabolism; 1,4-dihydroxy-2-naphthoate biosynthesis; 1,4-dihydroxy-2-naphthoate from chorismate: step 6/7. The protein operates within quinol/quinone metabolism; menaquinone biosynthesis. Converts o-succinylbenzoyl-CoA (OSB-CoA) to 1,4-dihydroxy-2-naphthoyl-CoA (DHNA-CoA). The sequence is that of 1,4-dihydroxy-2-naphthoyl-CoA synthase (menB) from Cyanidium caldarium (Red alga).